A 454-amino-acid polypeptide reads, in one-letter code: V-type ATP synthase subunit I 2 (454 aa).

Positions 101–121 (EREGDAPSVPRGKSSVAHDSA) are disordered. 4 consecutive transmembrane segments (helical) span residues 254-274 (LLFGIMFGDLGQGLLFFVLGL), 293-313 (VFLSVGFSSMVMGFLTGEFFA), 351-371 (MAFFGFTLFLGFVINSLGLII), and 424-444 (ACLSWVFFVKSFWSVCASVCV).

The protein belongs to the V-ATPase 116 kDa subunit family.

Its subcellular location is the cell membrane. Produces ATP from ADP in the presence of a proton gradient across the membrane. This chain is V-type ATP synthase subunit I 2 (atpI2), found in Treponema pallidum (strain Nichols).